The sequence spans 370 residues: DNA replication and repair protein RecF (370 aa).

Position 30-37 (30-37 (GENAQGKT)) interacts with ATP.

The protein belongs to the RecF family.

The protein resides in the cytoplasm. Functionally, the RecF protein is involved in DNA metabolism; it is required for DNA replication and normal SOS inducibility. RecF binds preferentially to single-stranded, linear DNA. It also seems to bind ATP. This is DNA replication and repair protein RecF from Listeria innocua serovar 6a (strain ATCC BAA-680 / CLIP 11262).